Here is a 369-residue protein sequence, read N- to C-terminus: uncharacterized protein (369 aa).

Helical transmembrane passes span Q25–W45, F47–A67, L119–M139, L152–L172, H206–V226, L235–L255, P272–G292, F296–L316, and L323–A343.

The protein to B.subtilis ComEC.

Its subcellular location is the cell membrane. This is an uncharacterized protein from Mycoplasma genitalium (strain ATCC 33530 / DSM 19775 / NCTC 10195 / G37) (Mycoplasmoides genitalium).